Reading from the N-terminus, the 306-residue chain is tRNA pseudouridine synthase B (306 aa).

Aspartate 46 acts as the Nucleophile in catalysis.

The protein belongs to the pseudouridine synthase TruB family. Type 1 subfamily.

The enzyme catalyses uridine(55) in tRNA = pseudouridine(55) in tRNA. Its function is as follows. Responsible for synthesis of pseudouridine from uracil-55 in the psi GC loop of transfer RNAs. The sequence is that of tRNA pseudouridine synthase B from Gluconacetobacter diazotrophicus (strain ATCC 49037 / DSM 5601 / CCUG 37298 / CIP 103539 / LMG 7603 / PAl5).